A 359-amino-acid chain; its full sequence is UDP-N-acetylglucosamine--N-acetylmuramyl-(pentapeptide) pyrophosphoryl-undecaprenol N-acetylglucosamine transferase (359 aa).

UDP-N-acetyl-alpha-D-glucosamine is bound by residues 15–17 (TGG), N127, R166, S191, I245, 264–269 (ALTVSE), and Q290.

Belongs to the glycosyltransferase 28 family. MurG subfamily.

Its subcellular location is the cell inner membrane. It carries out the reaction di-trans,octa-cis-undecaprenyl diphospho-N-acetyl-alpha-D-muramoyl-L-alanyl-D-glutamyl-meso-2,6-diaminopimeloyl-D-alanyl-D-alanine + UDP-N-acetyl-alpha-D-glucosamine = di-trans,octa-cis-undecaprenyl diphospho-[N-acetyl-alpha-D-glucosaminyl-(1-&gt;4)]-N-acetyl-alpha-D-muramoyl-L-alanyl-D-glutamyl-meso-2,6-diaminopimeloyl-D-alanyl-D-alanine + UDP + H(+). It functions in the pathway cell wall biogenesis; peptidoglycan biosynthesis. Its function is as follows. Cell wall formation. Catalyzes the transfer of a GlcNAc subunit on undecaprenyl-pyrophosphoryl-MurNAc-pentapeptide (lipid intermediate I) to form undecaprenyl-pyrophosphoryl-MurNAc-(pentapeptide)GlcNAc (lipid intermediate II). This chain is UDP-N-acetylglucosamine--N-acetylmuramyl-(pentapeptide) pyrophosphoryl-undecaprenol N-acetylglucosamine transferase, found in Pseudomonas putida (strain W619).